Reading from the N-terminus, the 164-residue chain is UPF0114 protein YqhA (164 aa).

Helical transmembrane passes span 10–32, 53–75, and 136–155; these read YASRWLLAPVYFGLSLALIALAL, LILVLLSLVDMTLVGGLLVMVMF, and LMWYVIIHLTFVLSAFVMGY.

It belongs to the UPF0114 family.

It localises to the cell membrane. The polypeptide is UPF0114 protein YqhA (Salmonella typhi).